The chain runs to 422 residues: MAM and fibronectin type III domain-containing protein 1 (422 aa).

An MAM domain is found at lysine 1–glycine 75. 3 Fibronectin type-III domains span residues phenylalanine 2–alanine 74, proline 196–threonine 286, and proline 291–threonine 386.

As to expression, component of the acid-insoluble and acid-soluble organic matrix of the aragonitic skeleton (at protein level).

It is found in the secreted. The chain is MAM and fibronectin type III domain-containing protein 1 from Acropora millepora (Staghorn coral).